Here is a 122-residue protein sequence, read N- to C-terminus: Large ribosomal subunit protein uL14 (122 aa).

This sequence belongs to the universal ribosomal protein uL14 family. Part of the 50S ribosomal subunit. Forms a cluster with proteins L3 and L19. In the 70S ribosome, L14 and L19 interact and together make contacts with the 16S rRNA in bridges B5 and B8.

Functionally, binds to 23S rRNA. Forms part of two intersubunit bridges in the 70S ribosome. The protein is Large ribosomal subunit protein uL14 of Verminephrobacter eiseniae (strain EF01-2).